Reading from the N-terminus, the 84-residue chain is UPF0297 protein NT01CX_2279 (84 aa).

Belongs to the UPF0297 family.

The polypeptide is UPF0297 protein NT01CX_2279 (Clostridium novyi (strain NT)).